The sequence spans 509 residues: Probable Xaa-Pro aminopeptidase MAC_04092 (509 aa).

Mn(2+)-binding residues include Asp-273, Asp-284, Glu-437, and Glu-478.

Belongs to the peptidase M24B family. It depends on Mn(2+) as a cofactor.

The catalysed reaction is Release of any N-terminal amino acid, including proline, that is linked to proline, even from a dipeptide or tripeptide.. Catalyzes the removal of a penultimate prolyl residue from the N-termini of peptides. The protein is Probable Xaa-Pro aminopeptidase MAC_04092 of Metarhizium acridum (strain CQMa 102).